The primary structure comprises 188 residues: Large ribosomal subunit protein eL18B (188 aa).

The interval 153 to 188 is disordered; it reads GKAPGTPHSRTKPYVLSKGRKFERARGRRASRGYKN. The segment covering 178–188 has biased composition (basic residues); sequence RGRRASRGYKN.

This sequence belongs to the eukaryotic ribosomal protein eL18 family. As to quaternary structure, component of the large ribosomal subunit.

It is found in the cytoplasm. The protein resides in the cytosol. Its subcellular location is the rough endoplasmic reticulum. Functionally, component of the large ribosomal subunit. The ribosome is a large ribonucleoprotein complex responsible for the synthesis of proteins in the cell. The polypeptide is Large ribosomal subunit protein eL18B (rpl18-b) (Xenopus laevis (African clawed frog)).